Here is an 88-residue protein sequence, read N- to C-terminus: Phosphocarrier protein HPr (88 aa).

Residues 1-88 (MKTQQFTVID…TLLTEMGLAQ (88 aa)) enclose the HPr domain. His-15 acts as the Pros-phosphohistidine intermediate in catalysis. Ser-46 is modified (phosphoserine; by HPrK/P).

This sequence belongs to the HPr family.

The protein localises to the cytoplasm. With respect to regulation, phosphorylation on Ser-46 inhibits the phosphoryl transfer from enzyme I to HPr. Its function is as follows. General (non sugar-specific) component of the phosphoenolpyruvate-dependent sugar phosphotransferase system (sugar PTS). This major carbohydrate active-transport system catalyzes the phosphorylation of incoming sugar substrates concomitantly with their translocation across the cell membrane. The phosphoryl group from phosphoenolpyruvate (PEP) is transferred to the phosphoryl carrier protein HPr by enzyme I. Phospho-HPr then transfers it to the PTS EIIA domain. P-Ser-HPr interacts with the catabolite control protein A (CcpA), forming a complex that binds to DNA at the catabolite response elements cre, operator sites preceding a large number of catabolite-regulated genes. Thus, P-Ser-HPr is a corepressor in carbon catabolite repression (CCR), a mechanism that allows bacteria to coordinate and optimize the utilization of available carbon sources. P-Ser-HPr also plays a role in inducer exclusion, in which it probably interacts with several non-PTS permeases and inhibits their transport activity. This is Phosphocarrier protein HPr (ptsH) from Lysinibacillus sphaericus (Bacillus sphaericus).